The chain runs to 445 residues: 6-phosphogluconate dehydrogenase, decarboxylating (445 aa).

NADP(+) contacts are provided by residues alanine 1–glycine 4, asparagine 22–serine 24, valine 63–alanine 65, and asparagine 91. Residues asparagine 91 and serine 117–glycine 119 each bind substrate. Lysine 172 functions as the Proton acceptor in the catalytic mechanism. Histidine 175–asparagine 176 lines the substrate pocket. Glutamate 179 serves as the catalytic Proton donor. Residues tyrosine 180, lysine 249, arginine 276, arginine 434, and histidine 440 each coordinate substrate.

It belongs to the 6-phosphogluconate dehydrogenase family. In terms of assembly, homodimer.

The catalysed reaction is 6-phospho-D-gluconate + NADP(+) = D-ribulose 5-phosphate + CO2 + NADPH. The protein operates within carbohydrate degradation; pentose phosphate pathway; D-ribulose 5-phosphate from D-glucose 6-phosphate (oxidative stage): step 3/3. Functionally, catalyzes the oxidative decarboxylation of 6-phosphogluconate to ribulose 5-phosphate and CO(2), with concomitant reduction of NADP to NADPH. The sequence is that of 6-phosphogluconate dehydrogenase, decarboxylating (gnd) from Citrobacter amalonaticus.